We begin with the raw amino-acid sequence, 330 residues long: Aspartate--ammonia ligase (330 aa).

Belongs to the class-II aminoacyl-tRNA synthetase family. AsnA subfamily.

It localises to the cytoplasm. It catalyses the reaction L-aspartate + NH4(+) + ATP = L-asparagine + AMP + diphosphate + H(+). Its pathway is amino-acid biosynthesis; L-asparagine biosynthesis; L-asparagine from L-aspartate (ammonia route): step 1/1. The protein is Aspartate--ammonia ligase of Treponema pallidum (strain Nichols).